Consider the following 377-residue polypeptide: Cytochrome c peroxidase, mitochondrial (377 aa).

A mitochondrion-targeting transit peptide spans 1–17 (MSFRAPNLIRSAAGRRA). His138 serves as the catalytic Proton acceptor. His261 is a binding site for heme b. Trp277 acts as the Tryptophan radical intermediate in catalysis.

This sequence belongs to the peroxidase family. Cytochrome c peroxidase subfamily. In terms of assembly, forms a one-to-one complex with cytochrome c. It depends on heme b as a cofactor.

Its subcellular location is the mitochondrion matrix. The protein localises to the mitochondrion intermembrane space. It catalyses the reaction 2 Fe(II)-[cytochrome c] + H2O2 + 2 H(+) = 2 Fe(III)-[cytochrome c] + 2 H2O. Functionally, destroys radicals which are normally produced within the cells and which are toxic to biological systems. The protein is Cytochrome c peroxidase, mitochondrial (CCP1) of Cryptococcus neoformans var. neoformans serotype D (strain JEC21 / ATCC MYA-565) (Filobasidiella neoformans).